Consider the following 54-residue polypeptide: Large ribosomal subunit protein bL33 (54 aa).

Belongs to the bacterial ribosomal protein bL33 family.

This Herpetosiphon aurantiacus (strain ATCC 23779 / DSM 785 / 114-95) protein is Large ribosomal subunit protein bL33.